The chain runs to 887 residues: MTSKEIRQQYLKFFESKGHLIVPSAPIVLKDDPTLMFNNSGMAQFKEYFLGNGTPKSPRIADTQKCLRVSGKHNDLEDVGFDTYHHTMFEMLGNWSFGDYFKKEAINWAWELLTEVYKIPKQNLYVSVFEGSKEDNVPFDQEAWDIWKGLIDEDRIILGNKKDNFWEMGDQGPCGPCSEIHVDLRTPEEKAQVSGKSLVNNDHPQVVEIWNNVFMEFNRKADGSLEKLPAQHVDTGMGFERLCMALQGKTSNYDTDVFTPLIEKVTQITGYKYTSNEVKNISEEQNKTNIAIRVIVDHVRAVAFAIADGQLPSNTGAGYVIRRILRRAIRYGFTFLDTKEPFITKLVAVLASQMGEFFPEIKSQQQLVTNVIREEEASFLRTLEQGLQLLDKVVAETKGKEVSGAKAFELYDTFGFPIDLTALILREKGYELDEAGFNAAMQEQKNRSRAASEVFTEDWSVLIPGNIETFVGYDKTENDVKITRIRKVNSKKDGILYQIVLDNTPFYPEGGGQVGDKGTLVSANDSSDSEQAKQTIDIIDTKKENNLILHFAKQLPENIETGFVAKVNTNLRASTSKNHSATHLMHLALRSILGTHVEQKGSLVNPDYLRFDFSHFSKVSDDQLRQVEASVNAQIEAQLQLTEHRNIPIKEALDKGAMALFGEKYGDNVRMIEFGESKELCGGIHVKNTAQIWHFKILSEGAVAAGIRRIEAITGDAVKAFYTNQENTLSEIKEVLKKPQDILKSVTSLQDDNVKLKKQIEQLLKEKIEGLKNTLVSEFQEINGINFLSKQVDLSMSSTKDLLQALGSLKPNSFVVLASIEENMPNIHCYIAKELVAGKGLNANVVIKELGKYIEGNGGGQPFFASGKGKNVSGIKEALQKAIEFVK.

The Zn(2+) site is built by H579, H583, C681, and H685.

This sequence belongs to the class-II aminoacyl-tRNA synthetase family. Requires Zn(2+) as cofactor.

It localises to the cytoplasm. It carries out the reaction tRNA(Ala) + L-alanine + ATP = L-alanyl-tRNA(Ala) + AMP + diphosphate. Catalyzes the attachment of alanine to tRNA(Ala) in a two-step reaction: alanine is first activated by ATP to form Ala-AMP and then transferred to the acceptor end of tRNA(Ala). Also edits incorrectly charged Ser-tRNA(Ala) and Gly-tRNA(Ala) via its editing domain. This chain is Alanine--tRNA ligase, found in Flavobacterium psychrophilum (strain ATCC 49511 / DSM 21280 / CIP 103535 / JIP02/86).